Reading from the N-terminus, the 259-residue chain is Protein BEAN1 (259 aa).

The helical transmembrane segment at 36–56 (VLVASAVIGVVIILSCITIIV) threads the bilayer. The span at 71 to 89 (RHRHHRHHHHHHHHRRRRH) shows a compositional bias: basic residues. Disordered stretches follow at residues 71–91 (RHRH…RHRE) and 152–259 (VGPG…ERIV). Residues 171–187 (LTDSCPTLDGTSDSGSG) show a composition bias toward polar residues. Positions 221–230 (GAGPPSGLLP) are enriched in low complexity.

As to quaternary structure, interacts with NEDD4.

Its subcellular location is the membrane. This Homo sapiens (Human) protein is Protein BEAN1 (BEAN1).